We begin with the raw amino-acid sequence, 42 residues long: Photosystem II reaction center protein J (42 aa).

Residues 10-30 (IPLWLVGTVVGIAALTLLSVF) form a helical membrane-spanning segment.

This sequence belongs to the PsbJ family. In terms of assembly, PSII is composed of 1 copy each of membrane proteins PsbA, PsbB, PsbC, PsbD, PsbE, PsbF, PsbH, PsbI, PsbJ, PsbK, PsbL, PsbM, PsbT, PsbX, PsbY, PsbZ, Psb30/Ycf12, at least 3 peripheral proteins of the oxygen-evolving complex and a large number of cofactors. It forms dimeric complexes.

The protein resides in the plastid. The protein localises to the chloroplast thylakoid membrane. In terms of biological role, one of the components of the core complex of photosystem II (PSII). PSII is a light-driven water:plastoquinone oxidoreductase that uses light energy to abstract electrons from H(2)O, generating O(2) and a proton gradient subsequently used for ATP formation. It consists of a core antenna complex that captures photons, and an electron transfer chain that converts photonic excitation into a charge separation. This Tupiella akineta (Green alga) protein is Photosystem II reaction center protein J.